The chain runs to 198 residues: MAVLALCLLWTLASAVRPAPVAPLGGPEPAQYEELTLLFHGALQLGQALNGVYRATEARLTEAGHSLGLYDRALEFLGTEVRQGQDATQELRTSLSEIQVEEDALHLRAEATARSLGEVARAQQALRDTVRRLQVQLRGAWLGQAHQEFETLKARADKQSHLLWALTGHVQRQQREMAEQQQWLRQIQQRLHTAALPA.

The N-terminal stretch at 1-15 (MAVLALCLLWTLASA) is a signal peptide.

It belongs to the ANGPTL8 family. In terms of assembly, interacts with ANGPTL3. Post-translationally, proteolytically cleaved at the N-terminus. In terms of tissue distribution, expressed in liver and fat. Enriched in white and brown adipose tissues.

It is found in the secreted. Its function is as follows. Hormone that acts as a blood lipid regulator by regulating serum triglyceride levels. May be involved in the metabolic transition between fasting and refeeding: required to direct fatty acids to adipose tissue for storage in the fed state. According to a report, may act by promoting ANGPTL3 cleavage. According to another study, not required for cleavage of ANGPTL3. This chain is Angiopoietin-like protein 8, found in Mus musculus (Mouse).